The primary structure comprises 399 residues: Elongation factor Tu (399 aa).

The 195-residue stretch at 10–204 folds into the tr-type G domain; it reads KPHVNIGTIG…AVDASIPEPE (195 aa). The tract at residues 19–26 is G1; the sequence is GHVDHGKT. 19–26 is a binding site for GTP; it reads GHVDHGKT. Threonine 26 contributes to the Mg(2+) binding site. Positions 60–64 are G2; that stretch reads GITIN. A G3 region spans residues 81–84; the sequence is DCPG. Residues 81–85 and 136–139 contribute to the GTP site; these read DCPGH and NKCD. The interval 136-139 is G4; that stretch reads NKCD. The G5 stretch occupies residues 174 to 176; the sequence is SGL.

This sequence belongs to the TRAFAC class translation factor GTPase superfamily. Classic translation factor GTPase family. EF-Tu/EF-1A subfamily. As to quaternary structure, monomer.

It localises to the cytoplasm. It carries out the reaction GTP + H2O = GDP + phosphate + H(+). Its function is as follows. GTP hydrolase that promotes the GTP-dependent binding of aminoacyl-tRNA to the A-site of ribosomes during protein biosynthesis. In Synechococcus sp. (strain CC9311), this protein is Elongation factor Tu.